The sequence spans 249 residues: Probable hydroxyacylglutathione hydrolase ECU02_0580 (249 aa).

The Zn(2+) site is built by H75, H77, D79, H80, H126, D144, and H183. Substrate-binding positions include 183–185 and 240–243; these read HDY and RERK.

It belongs to the metallo-beta-lactamase superfamily. Glyoxalase II family. It depends on Zn(2+) as a cofactor.

The protein resides in the cytoplasm. It is found in the nucleus. The catalysed reaction is an S-(2-hydroxyacyl)glutathione + H2O = a 2-hydroxy carboxylate + glutathione + H(+). The protein operates within secondary metabolite metabolism; methylglyoxal degradation; (R)-lactate from methylglyoxal: step 2/2. Its function is as follows. Thiolesterase that catalyzes the hydrolysis of S-D-lactoyl-glutathione to form glutathione and D-lactic acid. This is Probable hydroxyacylglutathione hydrolase ECU02_0580 from Encephalitozoon cuniculi (strain GB-M1) (Microsporidian parasite).